We begin with the raw amino-acid sequence, 364 residues long: MEVKEALFMNKGEGESSYAQSSSFTETVTSMTMPVLENAVETLFSKDFHLLQALNAADLGCAAGPTTFTVISTIKRMMEKKCRELNCQTLELQVYLNDLPGNDFNTLFKGLSSKVVGNKCEEVPCYVVGVPGSFHGRLFPRNSLHLVHSCYSVHWLTQAPKGLTSKEGLALNKGKIYISKTSPPVVREAYLSQFHEDFTMFLNSRSQEVVPNGCMVLILRGRLSSDPSDMESCFTWELLAVAIAELVSQGLIDEDKLDTFNVPSYFPSLEEVKDIVERNGSFTIDHMEGFELDSPQMQENDKWVRGEKFATVARAFTEPIISNQFGHEIMDKLYEKFTHIVVSDLEAKIPKITSIILVLSKIVG.

6 residues coordinate S-adenosyl-L-homocysteine: Tyr-18, Cys-61, Asp-98, Leu-99, Ser-133, and Phe-134. 4 residues coordinate Mg(2+): Asn-172, Asp-258, Phe-260, and Asn-261.

This sequence belongs to the methyltransferase superfamily. Type-7 methyltransferase family. The cofactor is Mg(2+).

In terms of biological role, no detectable N-methyltransferase activity. This is Probable methyltransferase ICS2 from Camellia irrawadiensis (Burmese tea).